Here is a 70-residue protein sequence, read N- to C-terminus: Antimicrobial peptide VpCT1 (70 aa).

An N-terminal signal peptide occupies residues 1–23 (MKNQFAVLLVALVLLQLFSQSEA). Leu-36 carries the post-translational modification Leucine amide. The propeptide occupies 37-70 (GKRGLRNFDLEQMDDTYEPELSEADLRYLQDLLR).

It belongs to the non-disulfide-bridged peptide (NDBP) superfamily. Short antimicrobial peptide (group 4) family. In terms of tissue distribution, expressed by the venom gland.

It is found in the secreted. The protein localises to the target cell membrane. Functionally, antimicrobial peptide with potent activity against bacteria S.aureus (MIC=4.7 uM) and E.coli (MIC=31.5 uM), and pathogenic yeasts C.albicans (MIC=25 uM) and C.glabrata (MIC=12.5 uM). Is not very effective against P.aeruginosa (MIC=150 and &gt;300 uM). Also provokes moderate hemolysis on human erythrocytes (HC(50)=10.5 uM). This Mesomexovis punctatus (Scorpion) protein is Antimicrobial peptide VpCT1.